Consider the following 243-residue polypeptide: Cysteine-rich secretory protein 2 (243 aa).

Residues 1-21 form the signal peptide; that stretch reads MALLPVLFLVTVLLPSLPAEG. The SCP domain maps to 41 to 169; it reads VNKHNELRKA…SLKYYYVCQY (129 aa). 5 disulfide bridges follow: Cys-189/Cys-196, Cys-192/Cys-201, Cys-205/Cys-238, Cys-214/Cys-232, and Cys-223/Cys-236. A ShKT domain is found at 205–238; sequence CQYQDLLSNCDSLKNTAGCEHELLKEKCKATCLC.

This sequence belongs to the CRISP family. In terms of assembly, interacts with NSUN4 isoform 3. In terms of tissue distribution, testis and epididymis.

Its subcellular location is the secreted. Its function is as follows. May regulate some ion channels' activity and thereby regulate calcium fluxes during sperm capacitation. In Homo sapiens (Human), this protein is Cysteine-rich secretory protein 2 (CRISP2).